The following is a 136-amino-acid chain: Ribosome-binding factor A (136 aa).

A disordered region spans residues 1–22; sequence MNTAGPAGKLAGHAASGPTQRQ.

Belongs to the RbfA family. Monomer. Binds 30S ribosomal subunits, but not 50S ribosomal subunits or 70S ribosomes.

It is found in the cytoplasm. Its function is as follows. One of several proteins that assist in the late maturation steps of the functional core of the 30S ribosomal subunit. Associates with free 30S ribosomal subunits (but not with 30S subunits that are part of 70S ribosomes or polysomes). Required for efficient processing of 16S rRNA. May interact with the 5'-terminal helix region of 16S rRNA. This Gluconacetobacter diazotrophicus (strain ATCC 49037 / DSM 5601 / CCUG 37298 / CIP 103539 / LMG 7603 / PAl5) protein is Ribosome-binding factor A.